The sequence spans 387 residues: Muscleblind-like protein 1 (387 aa).

Threonine 6 carries the post-translational modification Phosphothreonine. C3H1-type zinc fingers lie at residues 13–41 (WLTL…HPSK), 47–73 (NGRV…HPPP), 178–206 (TDRL…HPAD), and 214–240 (DNTV…HPPA).

It belongs to the muscleblind family. As to quaternary structure, interacts with DDX1 and YBX1. Interacts with HNRNPH1; the interaction in RNA-independent. Interacts with RBPMS; the interaction allows cooperative assembly of RNA-bound stable cell-specific alternative splicing regulatory complexes.

Its subcellular location is the nucleus. The protein localises to the cytoplasm. It localises to the cytoplasmic granule. Its function is as follows. Mediates pre-mRNA alternative splicing regulation. Acts either as activator or repressor of splicing on specific pre-mRNA targets. Inhibits cardiac troponin-T (TNNT2) pre-mRNA exon inclusion but induces insulin receptor (IR) pre-mRNA exon inclusion in muscle. Antagonizes the alternative splicing activity pattern of CELF proteins. Regulates the TNNT2 exon 5 skipping through competition with U2AF2. Inhibits the formation of the spliceosome A complex on intron 4 of TNNT2 pre-mRNA. Binds to the stem-loop structure within the polypyrimidine tract of TNNT2 intron 4 during spliceosome assembly. Binds to the 5'-YGCU(U/G)Y-3'consensus sequence. Binds to the IR RNA. Binds to expanded CUG repeat RNA, which folds into a hairpin structure containing GC base pairs and bulged, unpaired U residues. Together with RNA binding proteins RBPMS and RBFOX2, activates vascular smooth muscle cells alternative splicing events. Regulates NCOR2 alternative splicing. The chain is Muscleblind-like protein 1 from Rattus norvegicus (Rat).